Reading from the N-terminus, the 460-residue chain is L-seryl-tRNA(Sec) selenium transferase (460 aa).

At lysine 293 the chain carries N6-(pyridoxal phosphate)lysine.

This sequence belongs to the SelA family. The cofactor is pyridoxal 5'-phosphate.

Its subcellular location is the cytoplasm. It catalyses the reaction L-seryl-tRNA(Sec) + selenophosphate + H(+) = L-selenocysteinyl-tRNA(Sec) + phosphate. It participates in aminoacyl-tRNA biosynthesis; selenocysteinyl-tRNA(Sec) biosynthesis; selenocysteinyl-tRNA(Sec) from L-seryl-tRNA(Sec) (bacterial route): step 1/1. Its function is as follows. Converts seryl-tRNA(Sec) to selenocysteinyl-tRNA(Sec) required for selenoprotein biosynthesis. The protein is L-seryl-tRNA(Sec) selenium transferase of Haemophilus ducreyi (strain 35000HP / ATCC 700724).